Consider the following 1167-residue polypeptide: Phenyloxazoline synthase MbtB (1167 aa).

One can recognise a Carrier 1 domain in the interval 2-78 (EAVVTSSQTV…AWTRLVGERT (77 aa)). Serine 39 carries the post-translational modification O-(pantetheine 4'-phosphoryl)serine. The segment at 78–100 (TAESPGAATQSGDTAASAGDPDA) is disordered. The interval 98 to 390 (PDAPFPLAPI…SSLMLDVDFT (293 aa)) is condensation/cyclization. The segment at 575–967 (TYAELRERVL…RIAGVEAAVA (393 aa)) is adenylation. The Carrier 2 domain maps to 1054–1130 (VPSTALERAL…ALARRLVDHE (77 aa)). An O-(pantetheine 4'-phosphoryl)serine modification is found at serine 1089.

This sequence belongs to the ATP-dependent AMP-binding enzyme family. MbtB subfamily. The cofactor is pantetheine 4'-phosphate. Post-translationally, 4'-phosphopantetheine is transferred from CoA to a specific serine in each of the two carrier protein domains, leading to their activation from apo to holo forms.

Its pathway is siderophore biosynthesis; mycobactin biosynthesis. In terms of biological role, involved in the initial steps of the mycobactin biosynthetic pathway. Putatively couples activated salicylic acid with serine or threonine and cyclizes this precursor to the hydroxyphenyloxazoline ring system present in this class of siderophores. The protein is Phenyloxazoline synthase MbtB (mbtB) of Mycobacterium sp. (strain MCS).